We begin with the raw amino-acid sequence, 435 residues long: Serine--tRNA ligase (435 aa).

L-serine is bound at residue 242–244; the sequence is TAE. 273–275 serves as a coordination point for ATP; it reads RSE. Glu296 is an L-serine binding site. 360-363 is a binding site for ATP; it reads EISS. An L-serine-binding site is contributed by Ser396.

The protein belongs to the class-II aminoacyl-tRNA synthetase family. Type-1 seryl-tRNA synthetase subfamily. Homodimer. The tRNA molecule binds across the dimer.

It localises to the cytoplasm. It catalyses the reaction tRNA(Ser) + L-serine + ATP = L-seryl-tRNA(Ser) + AMP + diphosphate + H(+). The enzyme catalyses tRNA(Sec) + L-serine + ATP = L-seryl-tRNA(Sec) + AMP + diphosphate + H(+). It functions in the pathway aminoacyl-tRNA biosynthesis; selenocysteinyl-tRNA(Sec) biosynthesis; L-seryl-tRNA(Sec) from L-serine and tRNA(Sec): step 1/1. Functionally, catalyzes the attachment of serine to tRNA(Ser). Is also able to aminoacylate tRNA(Sec) with serine, to form the misacylated tRNA L-seryl-tRNA(Sec), which will be further converted into selenocysteinyl-tRNA(Sec). The polypeptide is Serine--tRNA ligase (Vibrio cholerae serotype O1 (strain ATCC 39541 / Classical Ogawa 395 / O395)).